Here is a 526-residue protein sequence, read N- to C-terminus: Probable Xaa-Pro aminopeptidase GLRG_02280 (526 aa).

The Mn(2+) site is built by aspartate 285, aspartate 296, glutamate 454, and glutamate 495.

It belongs to the peptidase M24B family. It depends on Mn(2+) as a cofactor.

It carries out the reaction Release of any N-terminal amino acid, including proline, that is linked to proline, even from a dipeptide or tripeptide.. Catalyzes the removal of a penultimate prolyl residue from the N-termini of peptides. The chain is Probable Xaa-Pro aminopeptidase GLRG_02280 from Colletotrichum graminicola (strain M1.001 / M2 / FGSC 10212) (Maize anthracnose fungus).